Consider the following 479-residue polypeptide: Glycogen synthase (479 aa).

Position 16 (Lys-16) interacts with ADP-alpha-D-glucose.

This sequence belongs to the glycosyltransferase 1 family. Bacterial/plant glycogen synthase subfamily.

The enzyme catalyses [(1-&gt;4)-alpha-D-glucosyl](n) + ADP-alpha-D-glucose = [(1-&gt;4)-alpha-D-glucosyl](n+1) + ADP + H(+). It functions in the pathway glycan biosynthesis; glycogen biosynthesis. Synthesizes alpha-1,4-glucan chains using ADP-glucose. This chain is Glycogen synthase, found in Lactiplantibacillus plantarum (strain ATCC BAA-793 / NCIMB 8826 / WCFS1) (Lactobacillus plantarum).